Here is a 185-residue protein sequence, read N- to C-terminus: Orotate phosphoribosyltransferase (185 aa).

5-phospho-alpha-D-ribose 1-diphosphate-binding positions include Arg98, Lys99, Lys102, His104, and Glu128–Ser136. Orotate contacts are provided by Thr132 and Arg160.

It belongs to the purine/pyrimidine phosphoribosyltransferase family. PyrE subfamily. In terms of assembly, homodimer. Mg(2+) serves as cofactor.

The enzyme catalyses orotidine 5'-phosphate + diphosphate = orotate + 5-phospho-alpha-D-ribose 1-diphosphate. It functions in the pathway pyrimidine metabolism; UMP biosynthesis via de novo pathway; UMP from orotate: step 1/2. Its function is as follows. Catalyzes the transfer of a ribosyl phosphate group from 5-phosphoribose 1-diphosphate to orotate, leading to the formation of orotidine monophosphate (OMP). The protein is Orotate phosphoribosyltransferase of Bradyrhizobium sp. (strain ORS 278).